The chain runs to 157 residues: Protein PEROXIN-4 (157 aa).

Positions 3–153 (ASRARLFKEY…AQMYTRLAAM (151 aa)) constitute a UBC core domain. Cys-90 functions as the Glycyl thioester intermediate in the catalytic mechanism.

The protein belongs to the ubiquitin-conjugating enzyme family. Interacts with PEX22.

The protein localises to the peroxisome membrane. It catalyses the reaction S-ubiquitinyl-[E1 ubiquitin-activating enzyme]-L-cysteine + [E2 ubiquitin-conjugating enzyme]-L-cysteine = [E1 ubiquitin-activating enzyme]-L-cysteine + S-ubiquitinyl-[E2 ubiquitin-conjugating enzyme]-L-cysteine.. It functions in the pathway protein modification; protein ubiquitination. Its function is as follows. Required for peroxisome biogenesis. Necessary for the developmental elimination of obsolete peroxisome matrix proteins. May be involved in the ubiquitination of PEX5, targeting it for recycling. Accepts the ubiquitin from the E1 complex and catalyzes its covalent attachment to other proteins. The polypeptide is Protein PEROXIN-4 (PEX4) (Arabidopsis thaliana (Mouse-ear cress)).